The chain runs to 246 residues: tRNA pseudouridine synthase A (246 aa).

The Nucleophile role is filled by D52. Residue Y111 participates in substrate binding.

This sequence belongs to the tRNA pseudouridine synthase TruA family. As to quaternary structure, homodimer.

It carries out the reaction uridine(38/39/40) in tRNA = pseudouridine(38/39/40) in tRNA. Formation of pseudouridine at positions 38, 39 and 40 in the anticodon stem and loop of transfer RNAs. The chain is tRNA pseudouridine synthase A from Borrelia garinii subsp. bavariensis (strain ATCC BAA-2496 / DSM 23469 / PBi) (Borreliella bavariensis).